Here is a 423-residue protein sequence, read N- to C-terminus: Serine--tRNA ligase (423 aa).

231-233 (TGE) contacts L-serine. ATP is bound at residue 262–264 (RSE). Position 285 (E285) interacts with L-serine. Residue 349 to 352 (EISS) coordinates ATP. An L-serine-binding site is contributed by S385.

It belongs to the class-II aminoacyl-tRNA synthetase family. Type-1 seryl-tRNA synthetase subfamily. As to quaternary structure, homodimer. The tRNA molecule binds across the dimer.

The protein resides in the cytoplasm. It catalyses the reaction tRNA(Ser) + L-serine + ATP = L-seryl-tRNA(Ser) + AMP + diphosphate + H(+). It carries out the reaction tRNA(Sec) + L-serine + ATP = L-seryl-tRNA(Sec) + AMP + diphosphate + H(+). Its pathway is aminoacyl-tRNA biosynthesis; selenocysteinyl-tRNA(Sec) biosynthesis; L-seryl-tRNA(Sec) from L-serine and tRNA(Sec): step 1/1. Catalyzes the attachment of serine to tRNA(Ser). Is also able to aminoacylate tRNA(Sec) with serine, to form the misacylated tRNA L-seryl-tRNA(Sec), which will be further converted into selenocysteinyl-tRNA(Sec). This is Serine--tRNA ligase from Coxiella burnetii (strain CbuG_Q212) (Coxiella burnetii (strain Q212)).